Reading from the N-terminus, the 250-residue chain is Small ribosomal subunit protein uS2 (250 aa).

This sequence belongs to the universal ribosomal protein uS2 family.

This Paraburkholderia xenovorans (strain LB400) protein is Small ribosomal subunit protein uS2.